The sequence spans 152 residues: 6,7-dimethyl-8-ribityllumazine synthase (152 aa).

5-amino-6-(D-ribitylamino)uracil-binding positions include phenylalanine 18, 49–51, and 75–77; these read ALE and CVI. Position 80 to 81 (80 to 81) interacts with (2S)-2-hydroxy-3-oxobutyl phosphate; sequence ET. Catalysis depends on histidine 83, which acts as the Proton donor. Residue asparagine 108 participates in 5-amino-6-(D-ribitylamino)uracil binding. Arginine 122 is a (2S)-2-hydroxy-3-oxobutyl phosphate binding site.

The protein belongs to the DMRL synthase family.

The catalysed reaction is (2S)-2-hydroxy-3-oxobutyl phosphate + 5-amino-6-(D-ribitylamino)uracil = 6,7-dimethyl-8-(1-D-ribityl)lumazine + phosphate + 2 H2O + H(+). The protein operates within cofactor biosynthesis; riboflavin biosynthesis; riboflavin from 2-hydroxy-3-oxobutyl phosphate and 5-amino-6-(D-ribitylamino)uracil: step 1/2. Catalyzes the formation of 6,7-dimethyl-8-ribityllumazine by condensation of 5-amino-6-(D-ribitylamino)uracil with 3,4-dihydroxy-2-butanone 4-phosphate. This is the penultimate step in the biosynthesis of riboflavin. The chain is 6,7-dimethyl-8-ribityllumazine synthase from Bartonella bacilliformis (strain ATCC 35685 / KC583 / Herrer 020/F12,63).